The following is a 466-amino-acid chain: Reticulophagy regulator 3 (466 aa).

Residues 1–28 (MAEAEGVPTTPGPASGSTFRGRRDVSGS) form a disordered region. Residue A2 is modified to N-acetylalanine. Residues 2–80 (AEAEGVPTTP…WCLGLNAAFW (79 aa)) are Cytoplasmic-facing. The residue at position 10 (T10) is a Phosphothreonine. S26 carries the post-translational modification Phosphoserine. A helical transmembrane segment spans residues 81–101 (FFALTSLRLVFLLAFGLMIIV). Residues 102–163 (CIDQWKNKIW…FIRNVLLFKK (62 aa)) are Lumenal-facing. Residues 164 to 184 (QNPGKFCLLSCGILTFLAVLG) form a helical membrane-spanning segment. Topologically, residues 185-186 (RY) are cytoplasmic. A helical membrane pass occupies residues 187-207 (VPGLLLSYLMLVTVMMWPLAV). The Lumenal segment spans residues 208-381 (YHRLWDRAYV…ASRDEAALPE (174 aa)). Residues S258 and S260 each carry the phosphoserine modification. T283 carries the phosphothreonine modification. The disordered stretch occupies residues 284-374 (DSEHSDAEVS…EEPQAPPASR (91 aa)). A phosphoserine mark is found at S285, S288, S293, and S303. Residues 294 to 310 (CTDNGTFNLSRGQTPLT) are compositionally biased toward polar residues. A phosphothreonine mark is found at T307 and T310. Residues S313, S320, and S360 each carry the phosphoserine modification. Residues 316–331 (LDGHSDPEESFARDLP) are compositionally biased toward basic and acidic residues. The chain crosses the membrane as a helical span at residues 382–402 (LLLGALPVGSNLTSNLASLVS). The Cytoplasmic portion of the chain corresponds to 403–466 (QGMIQLALSG…QLDPASSRSH (64 aa)). The segment at 412–466 (GASQPGPSGAPAQRATRGFLRSPSSDLDTDAEGDDFELLDQSELSQLDPASSRSH) is disordered. Residues 438 to 451 (LDTDAEGDDFELLD) are compositionally biased toward acidic residues. T440 is modified (phosphothreonine). Residues 445–450 (DDFELL) carry the LIR motif motif. Polar residues predominate over residues 453–466 (SELSQLDPASSRSH).

It belongs to the RETREG family. As to quaternary structure, interacts with ATG8 family modifier proteins MAP1LC3A, MAP1LC3B, MAP1LC3C, GABARAP, GABARAPL1 and GABARAPL2. Interacts with CANX. Interacts with RTN4 isoform B.

It localises to the endoplasmic reticulum membrane. Its function is as follows. Endoplasmic reticulum (ER)-anchored autophagy regulator which exists in an inactive state under basal conditions but is activated following cellular stress. When activated, induces ER fragmentation and mediates ER delivery into lysosomes through sequestration into autophagosomes via interaction with ATG8 family proteins. Promotes ER membrane curvature and ER tubulation required for subsequent ER fragmentation and engulfment into autophagosomes. Required for collagen quality control in a LIR motif-dependent manner. Mediates NRF1-enhanced neurite outgrowth. The sequence is that of Reticulophagy regulator 3 from Homo sapiens (Human).